The primary structure comprises 601 residues: Probable translation initiation factor IF-2 (601 aa).

The tr-type G domain maps to 10–227 (LRAPIVVVLG…VLAGLAQRYL (218 aa)). The tract at residues 19–26 (GHVDAGKT) is G1. 19–26 (GHVDAGKT) is a binding site for GTP. Residues 44–48 (TMTQH) form a G2 region. A G3 region spans residues 83 to 86 (DTPG). Residues 83 to 87 (DTPGH) and 137 to 140 (NKID) contribute to the GTP site. The segment at 137-140 (NKID) is G4. Residues 205-207 (SAV) form a G5 region.

This sequence belongs to the TRAFAC class translation factor GTPase superfamily. Classic translation factor GTPase family. IF-2 subfamily.

Function in general translation initiation by promoting the binding of the formylmethionine-tRNA to ribosomes. Seems to function along with eIF-2. This is Probable translation initiation factor IF-2 from Thermofilum pendens (strain DSM 2475 / Hrk 5).